The following is a 589-amino-acid chain: Alpha-1,2-mannosyltransferase MNN22 (589 aa).

At 1 to 16 the chain is on the cytoplasmic side; sequence MGSIFKDGRRILVRPK. The chain crosses the membrane as a helical span at residues 17 to 33; the sequence is SLIICLCLISIIFTQLI. Over 34–589 the chain is Extracellular; it reads RYQYQLIADE…NTIAWLGKKT (556 aa). The disordered stretch occupies residues 50-77; it reads EDHSSSQSLKNTKLNSTRSSSPISPPKS. Polar residues predominate over residues 54–71; that stretch reads SSQSLKNTKLNSTRSSSP. N-linked (GlcNAc...) asparagine glycosylation is found at asparagine 64, asparagine 332, and asparagine 530.

Belongs to the MNN1/MNT family.

It is found in the golgi apparatus membrane. The protein operates within protein modification; protein glycosylation. Functionally, alpha-1,2-mannosyltransferase required for cell wall integrity. Responsible for addition of the first alpha-1,2-linked mannose to form the branches on the mannan backbone of oligosaccharides. Addition of alpha-1,2-mannose is required for stabilization of the alpha-1,6-mannose backbone and hence regulates mannan fibril length; and is important for both immune recognition and virulence. In Candida albicans (strain SC5314 / ATCC MYA-2876) (Yeast), this protein is Alpha-1,2-mannosyltransferase MNN22 (MNN22).